Reading from the N-terminus, the 321-residue chain is Serine/threonine-protein phosphatase PP1 isozyme 4 (321 aa).

Ala2 is modified (N-acetylalanine). 4 residues coordinate Mn(2+): Asp74, His76, Asp102, and Asn134. The active-site Proton donor is the His135. Residues His183 and His258 each coordinate Mn(2+).

The protein belongs to the PPP phosphatase family. PP-1 subfamily. In terms of assembly, interacts with the DELLA proteins RGA and GAI. Interacts with PIF3 and PIF5. Interacts with the auxin efflux carrier PIN1. It depends on Mn(2+) as a cofactor. Expressed in the vasculature of roots and cotyledons, tips of leaves, guard cells, bases of trichomes, pistils and stamen filaments.

It is found in the nucleus. Its subcellular location is the cytoplasm. It catalyses the reaction O-phospho-L-seryl-[protein] + H2O = L-seryl-[protein] + phosphate. It carries out the reaction O-phospho-L-threonyl-[protein] + H2O = L-threonyl-[protein] + phosphate. With respect to regulation, phosphatase activity is strongly reduced by the protein phosphatase inhibitor 2 (I-2). Its function is as follows. Serine/threonine-protein phosphatase that possesses phosphatase activity toward para-nitrophenyl phosphate (pNPP) in vitro. Acts as a positive regulator in the gibberellin (GA) signaling pathway to regulate plant growth and development. Promotes the GA-induced and proteasomal-dependent degradation of the DELLA proteins RGA and GAI by directly binding and dephosphorylating these proteins. Involved in the regulation of phytochrome B (phyB) signaling pathway that controls photomorphogenesis. Promotes the proteasomal-dependent degradation of PIF5 factor by directly binding and dephosphorylating this protein. Involved in the regulation of pavement cell (PC) interdigitation by modulating the auxin efflux carrier PIN1 polarity and endocytic trafficking. Regulates PIN1 polar targeting through direct binding and dephosphorylation. Acts antagonistically with PID in regulating PC development. This is Serine/threonine-protein phosphatase PP1 isozyme 4 from Arabidopsis thaliana (Mouse-ear cress).